Consider the following 332-residue polypeptide: MESLLSQLSSMTVVVADTGDLEAIKKYHPRDATTNPSLILAAAQMPAYQSLIDQALTTSREMLGTSAAKADVVKEALDELCVVFGKEILKLIPGRVSTEVDARLSFDTDATIEKARKIIAKYNADGISNDRVLIKIASTWEGIKAAEVLEKENIHCNLTLLFNFYQAVACAEAGVTLISPFVGRILDWYKSATGRDSYPATEDPGVVSVTKIFNFFKSNGYKTEVMGASFRNIEEITELAGCDLLTISPKLLQQLNETHMDLPIKLNAQKPLVIEEKIHLDQTSFELMMAGDKMATEKLDDGISGFSKAIDKLENQLNERLELIEGEVALTH.

Lys-135 serves as the catalytic Schiff-base intermediate with substrate.

Belongs to the transaldolase family. Type 1 subfamily. Homodimer.

The protein resides in the cytoplasm. The catalysed reaction is D-sedoheptulose 7-phosphate + D-glyceraldehyde 3-phosphate = D-erythrose 4-phosphate + beta-D-fructose 6-phosphate. The protein operates within carbohydrate degradation; pentose phosphate pathway; D-glyceraldehyde 3-phosphate and beta-D-fructose 6-phosphate from D-ribose 5-phosphate and D-xylulose 5-phosphate (non-oxidative stage): step 2/3. In terms of biological role, transaldolase is important for the balance of metabolites in the pentose-phosphate pathway. This is Transaldolase from Prochlorococcus marinus (strain NATL2A).